The primary structure comprises 503 residues: Cytochrome P450 7A1 (503 aa).

Residues 4–24 traverse the membrane as a helical segment; sequence ISLIWGIAVVVSCCIWFIIGI. Heme is bound at residue Cys444.

The protein belongs to the cytochrome P450 family. Heme is required as a cofactor.

The protein localises to the endoplasmic reticulum membrane. It localises to the microsome membrane. It catalyses the reaction cholesterol + reduced [NADPH--hemoprotein reductase] + O2 = 7alpha-hydroxycholesterol + oxidized [NADPH--hemoprotein reductase] + H2O + H(+). The catalysed reaction is 4beta-hydroxycholesterol + reduced [NADPH--hemoprotein reductase] + O2 = 4beta,7alpha-dihydroxycholesterol + oxidized [NADPH--hemoprotein reductase] + H2O + H(+). The enzyme catalyses lathosterol + reduced [NADPH--hemoprotein reductase] + O2 = 7alpha,8alpha-epoxy-5alpha-cholestan-3beta-ol + oxidized [NADPH--hemoprotein reductase] + H2O + H(+). It carries out the reaction lathosterol + reduced [NADPH--hemoprotein reductase] + O2 = 5alpha-cholestan-7-oxo-3beta-ol + oxidized [NADPH--hemoprotein reductase] + H2O + H(+). It catalyses the reaction 7-dehydrocholesterol + reduced [NADPH--hemoprotein reductase] + O2 = 7-oxocholesterol + oxidized [NADPH--hemoprotein reductase] + H2O + H(+). The catalysed reaction is (24S)-hydroxycholesterol + reduced [NADPH--hemoprotein reductase] + O2 = (24S)-7alpha-dihydroxycholesterol + oxidized [NADPH--hemoprotein reductase] + H2O + H(+). The enzyme catalyses (24R)-hydroxycholesterol + reduced [NADPH--hemoprotein reductase] + O2 = (24R)-7alpha-dihydroxycholesterol + oxidized [NADPH--hemoprotein reductase] + H2O + H(+). Its pathway is lipid metabolism; bile acid biosynthesis. The protein operates within steroid metabolism; cholesterol degradation. Functionally, a cytochrome P450 monooxygenase involved in the metabolism of endogenous cholesterol and its oxygenated derivatives (oxysterols). Mechanistically, uses molecular oxygen inserting one oxygen atom into a substrate, and reducing the second into a water molecule, with two electrons provided by NADPH via cytochrome P450 reductase (CPR; NADPH-ferrihemoprotein reductase). Functions as a critical regulatory enzyme of bile acid biosynthesis and cholesterol homeostasis. Catalyzes the hydroxylation of carbon hydrogen bond at 7-alpha position of cholesterol, a rate-limiting step in cholesterol catabolism and bile acid biosynthesis. 7-alpha hydroxylates several oxysterols, including 4beta-hydroxycholesterol and 24-hydroxycholesterol. Catalyzes the oxidation of the 7,8 double bond of 7-dehydrocholesterol and lathosterol with direct and predominant formation of the 7-keto derivatives. This is Cytochrome P450 7A1 from Mus musculus (Mouse).